The primary structure comprises 297 residues: Pyridoxal 5'-phosphate synthase subunit PdxS (297 aa).

Residue aspartate 27 coordinates D-ribose 5-phosphate. The Schiff-base intermediate with D-ribose 5-phosphate role is filled by lysine 84. Glycine 156 contacts D-ribose 5-phosphate. Residue arginine 168 participates in D-glyceraldehyde 3-phosphate binding. Residues glycine 217 and 238-239 (GS) each bind D-ribose 5-phosphate.

The protein belongs to the PdxS/SNZ family. In terms of assembly, in the presence of PdxT, forms a dodecamer of heterodimers.

It catalyses the reaction aldehydo-D-ribose 5-phosphate + D-glyceraldehyde 3-phosphate + L-glutamine = pyridoxal 5'-phosphate + L-glutamate + phosphate + 3 H2O + H(+). The protein operates within cofactor biosynthesis; pyridoxal 5'-phosphate biosynthesis. Catalyzes the formation of pyridoxal 5'-phosphate from ribose 5-phosphate (RBP), glyceraldehyde 3-phosphate (G3P) and ammonia. The ammonia is provided by the PdxT subunit. Can also use ribulose 5-phosphate and dihydroxyacetone phosphate as substrates, resulting from enzyme-catalyzed isomerization of RBP and G3P, respectively. This is Pyridoxal 5'-phosphate synthase subunit PdxS from Corynebacterium efficiens (strain DSM 44549 / YS-314 / AJ 12310 / JCM 11189 / NBRC 100395).